Reading from the N-terminus, the 364-residue chain is Carbamoyl phosphate synthase pyrimidine-specific small chain (364 aa).

Positions 1-171 are CPSase; the sequence is MKRRLVLENG…AYPSPGRGKR (171 aa). L-glutamine contacts are provided by serine 45, glycine 219, and glycine 221. A Glutamine amidotransferase type-1 domain is found at 171–356; that stretch reads RIVLVDFGMK…IEMIETTEKE (186 aa). Cysteine 246 (nucleophile) is an active-site residue. L-glutamine contacts are provided by leucine 247, glutamine 250, asparagine 288, glycine 290, and tyrosine 291. Active-site residues include histidine 329 and glutamate 331.

It belongs to the CarA family. Composed of two chains; the small (or glutamine) chain promotes the hydrolysis of glutamine to ammonia, which is used by the large (or ammonia) chain to synthesize carbamoyl phosphate. Tetramer of heterodimers (alpha,beta)4. Interacts with BrxC.

It carries out the reaction hydrogencarbonate + L-glutamine + 2 ATP + H2O = carbamoyl phosphate + L-glutamate + 2 ADP + phosphate + 2 H(+). The catalysed reaction is L-glutamine + H2O = L-glutamate + NH4(+). It participates in pyrimidine metabolism; UMP biosynthesis via de novo pathway; (S)-dihydroorotate from bicarbonate: step 1/3. Small subunit of the glutamine-dependent carbamoyl phosphate synthetase (CPSase). CPSase catalyzes the formation of carbamoyl phosphate from the ammonia moiety of glutamine, carbonate, and phosphate donated by ATP, constituting the first step of the biosynthetic pathway leading to arginine and/or urea. The small subunit (glutamine amidotransferase) binds and cleaves glutamine to supply the large subunit with the substrate ammonia. The protein is Carbamoyl phosphate synthase pyrimidine-specific small chain of Bacillus subtilis (strain 168).